Here is a 415-residue protein sequence, read N- to C-terminus: Putative F-box/FBD/LRR-repeat protein At3g49040 (415 aa).

The 49-residue stretch at 10–58 folds into the F-box domain; the sequence is EDRISELHEALLVHIMSSLPTKTVVATSVLSKRWRHVWKTVQNLKFVSK. 5 LRR repeats span residues 60-86, 87-114, 143-170, 171-196, and 213-241; these read HQTFSEDVYRFFMLHKAPFLESLDLEF, SNQLDASDLGILVGIAFARHVRNLVLDL, TLTLKHSILLYFPYRVCLKSLRKLHLYK, VHFYGKDSVYNLLCGCPSLRDLIVHR, and RLTIEDSGFGYGCCYVINAPSLKYLNIRR. The 106-residue stretch at 272–377 folds into the FBD domain; sequence ILESLTSAKR…TSLKKATFST (106 aa).

This is Putative F-box/FBD/LRR-repeat protein At3g49040 from Arabidopsis thaliana (Mouse-ear cress).